Reading from the N-terminus, the 78-residue chain is Probable [Fe-S]-dependent transcriptional repressor (78 aa).

Residues cysteine 56, cysteine 61, cysteine 64, and cysteine 70 each coordinate iron-sulfur cluster.

Belongs to the FeoC family.

Its function is as follows. May function as a transcriptional regulator that controls feoABC expression. The polypeptide is Probable [Fe-S]-dependent transcriptional repressor (Escherichia coli O17:K52:H18 (strain UMN026 / ExPEC)).